A 209-amino-acid chain; its full sequence is Protein ASG7 (209 aa).

Residues 1–49 (MTTLASSIEHKTKHLAAPFENDENPWMKKYCCQCKSCKMSVPVQPWLPR) are Lumenal-facing. A helical membrane pass occupies residues 50–70 (FFVFGILCPVFWLVNLLAWWF). Residues 71–184 (LQYWQPHELE…LLRKTFRDWN (114 aa)) lie on the Cytoplasmic side of the membrane. Residues Ser-121, Ser-123, and Ser-125 each carry the phosphoserine modification. Thr-153 bears the Phosphothreonine mark. A helical membrane pass occupies residues 185 to 205 (LRSLLGLLIDSILIIFVVLLC). Residues 206-209 (KKSR) are Lumenal-facing.

Its subcellular location is the endomembrane system. Functionally, required for receptor inhibition of inappropriately expressed a-factor receptor (STE3) in MAT a cells. Inhibits signaling by relocalizing the G protein beta-gamma (STE4-STE18) subunit to intracellular membranes. May also be a mechanism for the down-regulation of the mating pheromone response after the zygotic fusion event, promoting the transition of the new diploid cell to vegetative growth. This chain is Protein ASG7 (ASG7), found in Saccharomyces cerevisiae (strain ATCC 204508 / S288c) (Baker's yeast).